Here is an 866-residue protein sequence, read N- to C-terminus: N-alpha-acetyltransferase 15, NatA auxiliary subunit (866 aa).

TPR repeat units follow at residues 46-79 (GETL…DLKS), 80-113 (HVCW…DKDN), 148-184 (RASW…SPDK), and 224-257 (LAVE…NPEN). Lys-262 is subject to N6-acetyllysine. Phosphoserine is present on Ser-302. TPR repeat units lie at residues 374–407 (LWVQ…TPTL), 409–441 (ELFL…DTAD), and 485–518 (MWFQ…FIEI). The interval 500–866 (KFGEALKKCH…AEAEELANEI (367 aa)) is interaction with HYPK. A phosphoserine mark is found at Ser-537 and Ser-588. Positions 579-594 (EHEADTANMSDKELKK) are enriched in basic and acidic residues. Residues 579–642 (EHEADTANMS…EEIGGPKEEL (64 aa)) form a disordered region. A compositionally biased stretch (basic residues) spans 595–604 (LRNKQRRAQK). Residues 606–621 (AQIEEEKKNAEKEKQQ) show a composition bias toward basic and acidic residues. The Bipartite nuclear localization signal signature appears at 612–629 (KKNAEKEKQQRNQKKKKD). A TPR 8 repeat occupies 672–705 (IETHLFAFEIYFRKEKFLLMLQSVKRAFAIDSSH). N6-acetyllysine is present on residues Lys-735 and Lys-756. 2 positions are modified to phosphoserine: Ser-855 and Ser-856.

As to quaternary structure, component of the N-terminal acetyltransferase A complex (also called the NatA complex) composed of NAA10 and NAA15. Within the complex interacts with NAA10. Component of the N-terminal acetyltransferase A (NatA)/HYPK complex at least composed of NAA10, NAA15 and HYPK, which has N-terminal acetyltransferase activity. In complex with NAA10, interacts with HYPK. Component of the N-terminal acetyltransferase E (NatE) complex at least composed of NAA10, NAA15 and NAA50. Within the complex interacts with NAA10; the interaction is required for binding to NAA50. Interacts with NAAT50. The interaction of the NatA complex with NAA50 reduces the acetylation activity of the NatA complex. Component of the N-terminal acetyltransferase E (NatE)/HYPK complex at least composed of NAA10, NAA15, NAA50 and HYPK. In complex with NAA10 interacts with HYPK; the interaction with HYPK reduces the capacity of the NatA complex to interact with NAA50. Interacts with NAA11. Interacts with XRCC6 and XRCC5. In terms of processing, cleaved by caspases during apoptosis, resulting in a stable 35 kDa fragment. Expressed at high levels in testis and in ocular endothelial cells. Also found in brain (corpus callosum), heart, colon, bone marrow and at lower levels in most adult tissues, including thyroid, liver, pancreas, mammary and salivary glands, lung, ovary, urogenital system and upper gastrointestinal tract. Overexpressed in gastric cancer, in papillary thyroid carcinomas and in a Burkitt lymphoma cell line (Daudi). Specifically suppressed in abnormal proliferating blood vessels in eyes of patients with proliferative diabetic retinopathy.

Its subcellular location is the cytoplasm. It is found in the nucleus. In terms of biological role, auxillary subunit of N-terminal acetyltransferase complexes which display alpha (N-terminal) acetyltransferase (NAT) activity. The NAT activity may be important for vascular, hematopoietic and neuronal growth and development. Required to control retinal neovascularization in adult ocular endothelial cells. In complex with XRCC6 and XRCC5 (Ku80), up-regulates transcription from the osteocalcin promoter. This chain is N-alpha-acetyltransferase 15, NatA auxiliary subunit (NAA15), found in Homo sapiens (Human).